A 382-amino-acid polypeptide reads, in one-letter code: Mannitol-1-phosphate 5-dehydrogenase (382 aa).

4 to 15 (AVHFGAGNIGRG) serves as a coordination point for NAD(+).

The protein belongs to the mannitol dehydrogenase family.

The catalysed reaction is D-mannitol 1-phosphate + NAD(+) = beta-D-fructose 6-phosphate + NADH + H(+). The chain is Mannitol-1-phosphate 5-dehydrogenase from Vibrio vulnificus (strain YJ016).